Reading from the N-terminus, the 72-residue chain is Translation initiation factor IF-1 (72 aa).

The region spanning 1–72 (MAKQDVIELE…SRGRITYRYK (72 aa)) is the S1-like domain.

It belongs to the IF-1 family. In terms of assembly, component of the 30S ribosomal translation pre-initiation complex which assembles on the 30S ribosome in the order IF-2 and IF-3, IF-1 and N-formylmethionyl-tRNA(fMet); mRNA recruitment can occur at any time during PIC assembly.

It localises to the cytoplasm. One of the essential components for the initiation of protein synthesis. Stabilizes the binding of IF-2 and IF-3 on the 30S subunit to which N-formylmethionyl-tRNA(fMet) subsequently binds. Helps modulate mRNA selection, yielding the 30S pre-initiation complex (PIC). Upon addition of the 50S ribosomal subunit IF-1, IF-2 and IF-3 are released leaving the mature 70S translation initiation complex. The sequence is that of Translation initiation factor IF-1 from Staphylococcus epidermidis (strain ATCC 35984 / DSM 28319 / BCRC 17069 / CCUG 31568 / BM 3577 / RP62A).